A 142-amino-acid chain; its full sequence is Glia maturation factor gamma (142 aa).

S2 is subject to N-acetylserine. Positions 4-139 (SLVVCDVDPE…NETWLKEKLA (136 aa)) constitute an ADF-H domain.

This sequence belongs to the actin-binding proteins ADF family. GMF subfamily. In terms of tissue distribution, expressed in rat thymus, testis, and spleen. Is present predominantly in proliferative and differentiative organs.

This Rattus norvegicus (Rat) protein is Glia maturation factor gamma (Gmfg).